Consider the following 189-residue polypeptide: MKILANAIREGNILEYQNNLWIVSKKPDHTKPGKGGAYIQLEMKNLKTGTKIYERFSSSDYLEKATLEQRNYQYLYQENNHLVLMDLESFEQILVQKSIIASNKLPFLLENTVITVETYKDEPIRLVLPHTVVVEILETSPNIKGATVTASYKPAILSNGAKIMVPPYLSAGEKIVVKLEDISFVERAK.

The protein belongs to the elongation factor P family.

It localises to the cytoplasm. It functions in the pathway protein biosynthesis; polypeptide chain elongation. Its function is as follows. Involved in peptide bond synthesis. Stimulates efficient translation and peptide-bond synthesis on native or reconstituted 70S ribosomes in vitro. Probably functions indirectly by altering the affinity of the ribosome for aminoacyl-tRNA, thus increasing their reactivity as acceptors for peptidyl transferase. The polypeptide is Elongation factor P (Orientia tsutsugamushi (strain Ikeda) (Rickettsia tsutsugamushi)).